The primary structure comprises 244 residues: Serine-rich single-pass membrane protein 1 (244 aa).

The chain crosses the membrane as a helical span at residues 35–55 (CGTIGNFLLWYFVIVFVLMFF). Disordered stretches follow at residues 65–112 (DKKD…LTPV), 132–191 (QSQF…LGSY), and 213–244 (HSQQ…FSKF). Positions 80–94 (ASKETSYKWQSKDGA) are enriched in basic and acidic residues. 2 stretches are compositionally biased toward polar residues: residues 97 to 112 (PSQT…LTPV) and 132 to 142 (QSQFNEVNQNQ). The span at 161–176 (SWKESESEHHPSPDSI) shows a compositional bias: basic and acidic residues. Residues 231–244 (ESSISDINTKFSKF) are compositionally biased toward polar residues.

The protein resides in the membrane. The chain is Serine-rich single-pass membrane protein 1 (SSMEM1) from Macaca fascicularis (Crab-eating macaque).